The following is a 139-amino-acid chain: Non-structural protein 1 (139 aa).

Residues 136-139 (DLNS) carry the DLNP; interaction with MAP1B motif.

It belongs to the pneumovirus non-structural protein 1 family. In terms of assembly, monomer. Homomultimer. Heteromultimer with NS2. Interacts with the matrix protein M. Interacts with host ELOC and CUL2; this interaction allows NS1 to form an active E3 ligase with ELOC and CUL2. Interacts with host IRF3; this interaction leads to the disrupted association of IRF3 with CREBBP and thus reduced binding of IRF3 to the IFN-beta promoter. Interacts with host MAVS; this interaction prevents MAVS binding to RIGI and inhibits signaling pathway leading to interferon production. Interacts with host MAP1B/microtubule-associated protein 1B. Interacts with host TRIM25 (via SPRY domain); this interaction suppresses RIGI ubiquitination and results in decreased interaction between RIGI and MAVS.

It is found in the host cytoplasm. Its subcellular location is the host mitochondrion. It localises to the host nucleus. Its function is as follows. Plays a major role in antagonizing the type I IFN-mediated antiviral response by degrading or inhibiting multiple cellular factors required for either IFN induction or response pathways. Acts cooperatively with NS2 to repress activation and nuclear translocation of host IFN-regulatory factor IRF3. Also disrupts the association of IRF3 with CREBBP. Interacts with host mitochondrial-associated membrane (MAM) MAVS and prevents the interaction with RIGI. Interacts with TRIM25 to suppress TRIM25-mediated RIGI ubiquitination and thereby RIGI-MAVS interaction. Together with NS2, participates in the proteasomal degradation of host STAT2, IRF3, IRF7, TBK1 and RIGI through a NS-degradasome involving CUL2 and Elongin-C. The degradasome requires an intact mitochondrial MAVS. Decreases the levels of host TRAF3 and IKBKE/IKK-epsilon. As functions other than disruptions of the type I IFN-mediated antiviral signaling pathways, induces host SOCS1 and SOCS3 expression. Suppresses premature apoptosis by an NF-kappa-B-dependent, interferon-independent mechanism and thus facilitates virus growth. Additionally, NS1 may serve some inhibitory role in viral transcription and RNA replication. Suppresses proliferation and activation of host CD103+ CD8+ cytotoxic T-lymphocytes and Th17 helper T-lymphocytes. The chain is Non-structural protein 1 (1C) from Homo sapiens (Human).